The chain runs to 163 residues: Photosystem II extrinsic protein V (163 aa).

The signal sequence occupies residues 1–26 (MFKTYSKSFACILFCIFNIFVVSASA). The heme c site is built by Cys-63, Cys-66, His-67, and Met-130.

It belongs to the cytochrome c family. PsbV subfamily. PSII is composed of 1 copy each of membrane proteins PsbA, PsbB, PsbC, PsbD, PsbE, PsbF, PsbH, PsbI, PsbJ, PsbK, PsbL, PsbM, PsbT, PsbY, PsbZ, Psb30/Ycf12, at least 3 peripheral proteins of the oxygen-evolving complex and a large number of cofactors. It forms dimeric complexes. Requires heme c as cofactor.

The protein resides in the plastid. Its subcellular location is the chloroplast thylakoid membrane. Functionally, one of the extrinsic, lumenal subunits of photosystem II (PSII). PSII is a light-driven water plastoquinone oxidoreductase, using light energy to abstract electrons from H(2)O, generating a proton gradient subsequently used for ATP formation. The extrinsic proteins stabilize the structure of photosystem II oxygen-evolving complex (OEC), the ion environment of oxygen evolution and protect the OEC against heat-induced inactivation. The sequence is that of Photosystem II extrinsic protein V from Thalassiosira pseudonana (Marine diatom).